The following is a 354-amino-acid chain: Methylthioribose-1-phosphate isomerase (354 aa).

Substrate is bound by residues R58–A60, R101, and Q204. The active-site Proton donor is the D245. N255–K256 serves as a coordination point for substrate.

This sequence belongs to the eIF-2B alpha/beta/delta subunits family. MtnA subfamily.

The enzyme catalyses 5-(methylsulfanyl)-alpha-D-ribose 1-phosphate = 5-(methylsulfanyl)-D-ribulose 1-phosphate. It participates in amino-acid biosynthesis; L-methionine biosynthesis via salvage pathway; L-methionine from S-methyl-5-thio-alpha-D-ribose 1-phosphate: step 1/6. Catalyzes the interconversion of methylthioribose-1-phosphate (MTR-1-P) into methylthioribulose-1-phosphate (MTRu-1-P). The polypeptide is Methylthioribose-1-phosphate isomerase (Xanthomonas oryzae pv. oryzae (strain MAFF 311018)).